A 433-amino-acid polypeptide reads, in one-letter code: 3-phosphoshikimate 1-carboxyvinyltransferase (433 aa).

3-phosphoshikimate contacts are provided by Lys23, Ser24, and Arg28. Lys23 is a binding site for phosphoenolpyruvate. Phosphoenolpyruvate contacts are provided by Gly93 and Arg121. The 3-phosphoshikimate site is built by Ser167, Gln169, Asp318, and Lys345. A phosphoenolpyruvate-binding site is contributed by Gln169. Asp318 (proton acceptor) is an active-site residue. 2 residues coordinate phosphoenolpyruvate: Arg349 and Arg390.

This sequence belongs to the EPSP synthase family. As to quaternary structure, monomer.

Its subcellular location is the cytoplasm. The catalysed reaction is 3-phosphoshikimate + phosphoenolpyruvate = 5-O-(1-carboxyvinyl)-3-phosphoshikimate + phosphate. Its pathway is metabolic intermediate biosynthesis; chorismate biosynthesis; chorismate from D-erythrose 4-phosphate and phosphoenolpyruvate: step 6/7. Its function is as follows. Catalyzes the transfer of the enolpyruvyl moiety of phosphoenolpyruvate (PEP) to the 5-hydroxyl of shikimate-3-phosphate (S3P) to produce enolpyruvyl shikimate-3-phosphate and inorganic phosphate. The sequence is that of 3-phosphoshikimate 1-carboxyvinyltransferase from Nitratiruptor sp. (strain SB155-2).